The sequence spans 322 residues: Thiamine thiazole synthase (322 aa).

Residues C84, 105–106 (EA), G113, and V178 each bind substrate. C211 is subject to 2,3-didehydroalanine (Cys). Substrate-binding positions include D213, H228, M280, and 290-292 (RMG).

Belongs to the THI4 family. As to quaternary structure, homooctamer. Fe cation serves as cofactor. Post-translationally, during the catalytic reaction, a sulfide is transferred from Cys-211 to a reaction intermediate, generating a dehydroalanine residue.

The protein resides in the cytoplasm. The protein localises to the nucleus. The enzyme catalyses [ADP-thiazole synthase]-L-cysteine + glycine + NAD(+) = [ADP-thiazole synthase]-dehydroalanine + ADP-5-ethyl-4-methylthiazole-2-carboxylate + nicotinamide + 3 H2O + 2 H(+). Functionally, involved in biosynthesis of the thiamine precursor thiazole. Catalyzes the conversion of NAD and glycine to adenosine diphosphate 5-(2-hydroxyethyl)-4-methylthiazole-2-carboxylic acid (ADT), an adenylated thiazole intermediate. The reaction includes an iron-dependent sulfide transfer from a conserved cysteine residue of the protein to a thiazole intermediate. The enzyme can only undergo a single turnover, which suggests it is a suicide enzyme. May have additional roles in adaptation to various stress conditions and in DNA damage tolerance. The polypeptide is Thiamine thiazole synthase (Fusarium vanettenii (strain ATCC MYA-4622 / CBS 123669 / FGSC 9596 / NRRL 45880 / 77-13-4) (Fusarium solani subsp. pisi)).